Here is a 288-residue protein sequence, read N- to C-terminus: MKLQFTKMHGAGNDFVVLDGIHQQIDLTPAQWRALASRHFGVGADQILIVEKPSRPDVDFRYRIVNADGSEVEHCGNGARCFVRFVTDKGMTDKRSVRVEVMNGVITLTLQDDGQVTVDMGAPELEPARVPFRAEGLPTRAEGADTLYGLEVNGRTEWISVVSMGNPHAVQVVDDVENFPVLQDGPVVEHHAAFPNRVNAGFMQVQDRHAIRLRVYERGAGETLACGTGACAAVVAGIRRGLLDSPVRVHTHGGDLTIAWDGGAEPVRMTGPATTVFEGSIDLAALPA.

The substrate site is built by asparagine 13, glutamine 46, and asparagine 66. The active-site Proton donor is cysteine 75. Substrate is bound by residues 76–77 (GN), asparagine 166, asparagine 199, and 217–218 (ER). Cysteine 226 acts as the Proton acceptor in catalysis. 227–228 (GT) serves as a coordination point for substrate.

It belongs to the diaminopimelate epimerase family. As to quaternary structure, homodimer.

The protein resides in the cytoplasm. The enzyme catalyses (2S,6S)-2,6-diaminopimelate = meso-2,6-diaminopimelate. Its pathway is amino-acid biosynthesis; L-lysine biosynthesis via DAP pathway; DL-2,6-diaminopimelate from LL-2,6-diaminopimelate: step 1/1. Catalyzes the stereoinversion of LL-2,6-diaminopimelate (L,L-DAP) to meso-diaminopimelate (meso-DAP), a precursor of L-lysine and an essential component of the bacterial peptidoglycan. The chain is Diaminopimelate epimerase from Cupriavidus necator (strain ATCC 17699 / DSM 428 / KCTC 22496 / NCIMB 10442 / H16 / Stanier 337) (Ralstonia eutropha).